The chain runs to 677 residues: Protein windpipe (677 aa).

Residues 1-20 (MERVHLTAWLALFLIVVANA) form the signal peptide. The Extracellular portion of the chain corresponds to 21-451 (TPTPARTPTG…IGKPKDDSSA (431 aa)). N-linked (GlcNAc...) asparagine glycosylation is found at N53 and N80. LRR repeat units lie at residues 91-116 (LPEL…GLKR), 118-133 (NLKH…RKLP), 134-156 (QHLQ…LTHM), and 158-183 (QLHQ…NWLV). N-linked (GlcNAc...) asparagine glycosylation is found at N145 and N170. An LRRCT domain is found at 184–216 (ERIVYMEHPVVCSYPLEFRGRSWLQLKQDEICK). 3 disordered regions span residues 264–285 (AKKV…SGDL), 298–317 (TVAE…ASPS), and 325–385 (KDED…TVFS). Positions 347–372 (SKVKITSEDDIDSDGKPEESDVRPLE) are enriched in basic and acidic residues. The segment covering 374 to 385 (PENSENPDTVFS) has biased composition (polar residues). Residues 452–472 (IYYLLAVIGLIVVGLVLFVAI) traverse the membrane as a helical segment. The Cytoplasmic portion of the chain corresponds to 473–677 (KRCKYDSNAA…EPTHQVINGH (205 aa)). Disordered stretches follow at residues 502-523 (LGKP…LIGE) and 539-677 (NGEA…INGH). A compositionally biased stretch (low complexity) spans 595 to 607 (AQQQQLAEQNNNE).

Interacts with dome; the interaction promotes internalization of dome and its subsequent lysosomal degradation. In terms of tissue distribution, in adult intestine, expressed in both small progenitor cells and large nuclei enterocytes (at protein level). During embryogenesis, restricted to the developing trachea.

It localises to the cell membrane. Plays a role in negative regulation of the JAK/STAT pathway by binding to the receptor dome and promoting its internalization for subsequent lysosomal degradation, thereby reducing JAK/STAT signaling. In Drosophila melanogaster (Fruit fly), this protein is Protein windpipe.